The following is a 253-amino-acid chain: Sulfate transporter CysZ (253 aa).

4 consecutive transmembrane segments (helical) span residues 31–51, 75–95, 151–171, and 222–242; these read FVIL…WWLF, LLWP…FSTI, IVLL…PVLW, and IPVL…AMWV.

It belongs to the CysZ family.

The protein resides in the cell inner membrane. Its function is as follows. High affinity, high specificity proton-dependent sulfate transporter, which mediates sulfate uptake. Provides the sulfur source for the cysteine synthesis pathway. The sequence is that of Sulfate transporter CysZ from Citrobacter koseri (strain ATCC BAA-895 / CDC 4225-83 / SGSC4696).